Consider the following 192-residue polypeptide: uncharacterized protein (192 aa).

The interval 17–73 (MLRGSGKKPIQRLAKAPAATASSKTSEWRATTAYGFLPAGGDVRPHSPRYESQGVLS) is disordered. Residues 30–41 (AKAPAATASSKT) are compositionally biased toward low complexity.

This is an uncharacterized protein from Sinorhizobium fredii (strain NBRC 101917 / NGR234).